A 64-amino-acid chain; its full sequence is Prokaryotic ubiquitin-like protein Pup (64 aa).

Residues Met1–Asp37 are disordered. Residues Thr21–Tyr58 form an ARC ATPase binding region. A coiled-coil region spans residues Gly25–Glu52. Position 64 is a deamidated glutamine (Gln64). Residue Gln64 forms an Isoglutamyl lysine isopeptide (Gln-Lys) (interchain with K-? in acceptor proteins) linkage.

It belongs to the prokaryotic ubiquitin-like protein family. As to quaternary structure, strongly interacts with the proteasome-associated ATPase ARC through a hydrophobic interface; the interacting region of Pup lies in its C-terminal half. There is one Pup binding site per ARC hexamer ring. Post-translationally, is modified by deamidation of its C-terminal glutamine to glutamate by the deamidase Dop, a prerequisite to the subsequent pupylation process.

Its pathway is protein degradation; proteasomal Pup-dependent pathway. Its function is as follows. Protein modifier that is covalently attached to lysine residues of substrate proteins, thereby targeting them for proteasomal degradation. The tagging system is termed pupylation. The chain is Prokaryotic ubiquitin-like protein Pup from Mycobacterium marinum (strain ATCC BAA-535 / M).